The sequence spans 952 residues: uncharacterized protein (952 aa).

A CheB-type methylesterase domain is found at M1–R141. Positions V168–L440 constitute a CheR-type methyltransferase domain. Residues H923–G935 show a composition bias toward polar residues. Residues H923–A952 are disordered. The segment covering G936 to A952 has biased composition (gly residues).

This is an uncharacterized protein from Rhodobacter capsulatus (Rhodopseudomonas capsulata).